The primary structure comprises 254 residues: Phosphoglycerate mutase 1 (254 aa).

Substrate-binding positions include 10 to 17 (RHGESAWN) and 23 to 24 (SG). The active-site Tele-phosphohistidine intermediate is the histidine 11. Phosphoserine occurs at positions 14 and 23. Residue tyrosine 26 is modified to Phosphotyrosine. Serine 31 is subject to Phosphoserine. Substrate contacts are provided by residues arginine 62, 89 to 92 (ERHY), and lysine 100. The active-site Proton donor/acceptor is the glutamate 89. Lysine 106 is modified (N6-acetyllysine). Position 116–117 (116–117 (RR)) interacts with substrate. Serine 118 bears the Phosphoserine mark. Position 187-188 (187-188 (GN)) interacts with substrate. An N6-acetyllysine; alternate modification is found at lysine 251. Residue lysine 251 is modified to N6-succinyllysine; alternate. Residues lysine 253 and lysine 254 each carry the N6-acetyllysine modification.

It belongs to the phosphoglycerate mutase family. BPG-dependent PGAM subfamily. In terms of assembly, homodimer. Acetylated at Lys-253, Lys-253 and Lys-254 under high glucose condition. Acetylation increases catalytic activity. Under glucose restriction SIRT1 levels dramatically increase and it deacetylates the enzyme.

It carries out the reaction (2R)-2-phosphoglycerate = (2R)-3-phosphoglycerate. The enzyme catalyses (2R)-3-phospho-glyceroyl phosphate = (2R)-2,3-bisphosphoglycerate + H(+). In terms of biological role, catalyzes the interconversion of 2-phosphoglycerate and 3-phosphoglyceratea crucial step in glycolysis, by using 2,3-bisphosphoglycerate. Also catalyzes the interconversion of (2R)-2,3-bisphosphoglycerate and (2R)-3-phospho-glyceroyl phosphate. The sequence is that of Phosphoglycerate mutase 1 from Mus musculus (Mouse).